The primary structure comprises 509 residues: ATP synthase subunit alpha (509 aa).

Residue 169–176 (GDRKTGKT) participates in ATP binding.

It belongs to the ATPase alpha/beta chains family. As to quaternary structure, F-type ATPases have 2 components, CF(1) - the catalytic core - and CF(0) - the membrane proton channel. CF(1) has five subunits: alpha(3), beta(3), gamma(1), delta(1), epsilon(1). CF(0) has three main subunits: a(1), b(2) and c(9-12). The alpha and beta chains form an alternating ring which encloses part of the gamma chain. CF(1) is attached to CF(0) by a central stalk formed by the gamma and epsilon chains, while a peripheral stalk is formed by the delta and b chains.

It localises to the cell membrane. It carries out the reaction ATP + H2O + 4 H(+)(in) = ADP + phosphate + 5 H(+)(out). Functionally, produces ATP from ADP in the presence of a proton gradient across the membrane. The alpha chain is a regulatory subunit. The protein is ATP synthase subunit alpha of Lacticaseibacillus casei (strain BL23) (Lactobacillus casei).